Here is a 258-residue protein sequence, read N- to C-terminus: Indole-3-glycerol phosphate synthase (258 aa).

It belongs to the TrpC family.

The enzyme catalyses 1-(2-carboxyphenylamino)-1-deoxy-D-ribulose 5-phosphate + H(+) = (1S,2R)-1-C-(indol-3-yl)glycerol 3-phosphate + CO2 + H2O. It participates in amino-acid biosynthesis; L-tryptophan biosynthesis; L-tryptophan from chorismate: step 4/5. The sequence is that of Indole-3-glycerol phosphate synthase from Nautilia profundicola (strain ATCC BAA-1463 / DSM 18972 / AmH).